Reading from the N-terminus, the 99-residue chain is Gibberellin-regulated protein 2 (99 aa).

Residues 1–26 (MAVFRSTLVLLLIIVCLTTYELHVHA) form the signal peptide.

The protein belongs to the GASA family. In terms of processing, six disulfide bonds may be present. Dry seeds and maturating siliques.

The protein resides in the secreted. Its function is as follows. Gibberellin-regulated protein that may function in hormonal controlled steps of development such as seed germination, flowering and seed maturation. This Arabidopsis thaliana (Mouse-ear cress) protein is Gibberellin-regulated protein 2 (GASA2).